The sequence spans 429 residues: Inositol-3-phosphate synthase 1 (429 aa).

A helical transmembrane segment spans residues 12–32; sequence LGVLVVGVGGAVATTMIVGTL. Residues Ala-22, Val-23, Asp-79, Ala-116, Ala-165, Thr-167, Tyr-201, Ser-244, Arg-276, Asp-277, and Lys-290 each contribute to the NAD(+) site.

It belongs to the myo-inositol 1-phosphate synthase family. In terms of assembly, homotetramer. It depends on NAD(+) as a cofactor.

Its subcellular location is the membrane. It catalyses the reaction D-glucose 6-phosphate = 1D-myo-inositol 3-phosphate. It functions in the pathway polyol metabolism; myo-inositol biosynthesis; myo-inositol from D-glucose 6-phosphate: step 1/2. Its function is as follows. Key enzyme in myo-inositol biosynthesis pathway that catalyzes the conversion of glucose 6-phosphate to 1D-myo-inositol 3-phosphate in a NAD-dependent manner. In Bacteroides thetaiotaomicron (strain ATCC 29148 / DSM 2079 / JCM 5827 / CCUG 10774 / NCTC 10582 / VPI-5482 / E50), this protein is Inositol-3-phosphate synthase 1.